A 691-amino-acid chain; its full sequence is Cyclic nucleotide-gated channel alpha-1 (691 aa).

The Cytoplasmic segment spans residues 1-168 (MKKNIINTWY…PAGNMYYNWL (168 aa)). The segment at 31 to 151 (ENGARSSFSD…KGKDKKEEEK (121 aa)) is disordered. Residues 39-56 (SDDDGDDDSASMFEESEN) show a composition bias toward acidic residues. Composition is skewed to basic and acidic residues over residues 57 to 76 (ETPH…DPSQ) and 112 to 151 (SKSG…EEEK). Residues 169–190 (FCITLPVMYNWTMVIARACFDE) form a helical membrane-spanning segment. The Extracellular segment spans residues 191–200 (LQSDYLEYWI). Residues 201-221 (IFDYLSDIVYLLDMFVRTRTG) form a helical membrane-spanning segment. Over 222–246 (YLEQGLLVREEAKLIEKYKSNLQFK) the chain is Cytoplasmic. The chain crosses the membrane as a helical span at residues 247-265 (LDFLSVIPTDLLYFKLGWN). Residues 266–270 (YPEIR) lie on the Extracellular side of the membrane. A helical transmembrane segment spans residues 271–289 (LNRLLRISRMFEFFQRTET). Residues 290–296 (RTNYPNI) are Cytoplasmic-facing. Residues 294–402 (PNIFRISNLV…GNIGSMISNM (109 aa)) form an ion conduction pathway region. Residues 297 to 320 (FRISNLVMYIVIIIHWNACVYFSI) traverse the membrane as a helical segment. Residues 321–343 (SKAIGFGNDTWVYPDVNDPEFGR) are Extracellular-facing. A glycan (N-linked (GlcNAc...) asparagine) is linked at Asn-328. Transmembrane regions (helical) follow at residues 344–378 (LARK…VFVV) and 379–403 (VDFL…SNMN). A selectivity filter region spans residues 361 to 364 (TIGE). Residues 404 to 480 (AARAEFQARI…DTLKKVRIFA (77 aa)) form a C-linker region. Residues 404-691 (AARAEFQARI…ESRPLDSTQD (288 aa)) are Cytoplasmic-facing. The cyclic nucleotide-binding domain stretch occupies residues 484–604 (AGLLVELVLK…EEKGKQILMK (121 aa)). Positions 544, 547, 560, and 561 each coordinate 3',5'-cyclic GMP. The 3',5'-cyclic AMP site is built by Arg-560 and Thr-561. Positions 622–676 (LEEKVTRMEGSVDLLQTRFARILAEYESMQQKLKQRLTKVERFLKPIIDTEFSAL) form a coiled coil.

It belongs to the cyclic nucleotide-gated cation channel (TC 1.A.1.5) family. CNGA1 subfamily. In terms of assembly, forms heterotetrameric channels composed of CNGA1 and CNGB1 subunits with 3:1 stoichiometry. May also form cyclic nucleotide-activated homotetrameric channels, that are efficiently activated by saturating cGMP, but poorly activated by saturating cAMP compared to the heterotetramer with CNGB1. The channel binds Ca(2+)-bound CALM1 via CaM1 and CaM2 regions of the CNGB1 subunit; this interaction modulates the affinity of the channel for cNMPs in response to intracellular Ca(2+) levels.

The protein localises to the cell membrane. The catalysed reaction is Ca(2+)(in) = Ca(2+)(out). It catalyses the reaction Na(+)(in) = Na(+)(out). The enzyme catalyses K(+)(in) = K(+)(out). It carries out the reaction NH4(+)(in) = NH4(+)(out). The catalysed reaction is Rb(+)(in) = Rb(+)(out). It catalyses the reaction Li(+)(in) = Li(+)(out). The enzyme catalyses Cs(+)(in) = Cs(+)(out). In terms of biological role, pore-forming subunit of the rod cyclic nucleotide-gated channel. Mediates rod photoresponses at dim light converting transient changes in intracellular cGMP levels into electrical signals. In the dark, cGMP levels are high and keep the channel open enabling a steady inward current carried by Na(+) and Ca(2+) ions that leads to membrane depolarization and neurotransmitter release from synaptic terminals. Upon photon absorption cGMP levels decline leading to channel closure and membrane hyperpolarization that ultimately slows neurotransmitter release and signals the presence of light, the end point of the phototransduction cascade. Conducts cGMP- and cAMP-gated ion currents, with permeability for monovalent and divalent cations. The selectivity for Ca(2+) over Na(+) increases with cGMP concentrations, whereas the selectivity among monovalent ions is independent of the cGMP levels. The polypeptide is Cyclic nucleotide-gated channel alpha-1 (Canis lupus familiaris (Dog)).